An 843-amino-acid polypeptide reads, in one-letter code: Major vault protein alpha (843 aa).

Ala-2 carries the post-translational modification N-acetylalanine. MVP repeat units follow at residues 2–56 (ADLN…IPQR), 57–111 (NYCT…KVTA), 112–163 (LQVV…EEIK), 164–216 (ATII…EIVN), 217–272 (AYVL…GEVH), 273–324 (ITTL…IHNI), 325–376 (YVLT…KRES), 377–442 (IPLD…STRV), and 443–505 (VTYR…FLGP). The tract at residues 643–663 (QEAAARHEAERLEQGARGRLE) is disordered. A compositionally biased stretch (basic and acidic residues) spans 646–663 (AARHEAERLEQGARGRLE).

As to quaternary structure, the vault ribonucleoprotein particle is a huge (400 A x 670 A) cage structure of 12.9 MDa. It consists of a dimer of half-vaults, with each half-vault comprising 39 identical major vault protein (MVP) chains. Dictyostelium is one of the few organisms in which the major component is actually two proteins (alpha and beta).

Its subcellular location is the cytoplasm. It localises to the nucleus. Functionally, unknown, though MVP-alpha is required for normal vault structure. The protein is Major vault protein alpha (mvpA) of Dictyostelium discoideum (Social amoeba).